We begin with the raw amino-acid sequence, 38 residues long: Beta-defensin 8 (38 aa).

Intrachain disulfides connect cysteine 7/cysteine 36, cysteine 14/cysteine 29, and cysteine 19/cysteine 37.

The protein belongs to the beta-defensin family. In terms of tissue distribution, neutrophilic granules.

The protein resides in the secreted. Functionally, has bactericidal activity. Active against E.coli ML35 and S.aureus 502A. This is Beta-defensin 8 (DEFB8) from Bos taurus (Bovine).